The sequence spans 330 residues: MGPLWLDVAGYELSAEDREILQHPTVGGVILFGRNYHDNQQLLALNKAIRQAAKRPILIGVDQEGGRVQRFREGFSRIPPAQYYARAENGVELAEQGGWLMAAELIAHDVDLSFAPVLDMGFACKAIGNRAFGEDVQTVLKHSSAFLRGMKAVGMATTGKHFPGHGAVIADSHLETPYDERETIAQDMAIFRAQIEAGVLDAMMPAHVVYPHYDAQPASGSSYWLKQVLREELGFKGIVFSDDLSMEGAAVMGGPVERSHQALVAGCDMILMCNKREAAVEVLDNLPIMVVPQATALLKKQQFSYSELKRLDRWQQASANMQRLIEQFSV.

Substrate contacts are provided by residues aspartate 62, arginine 70, arginine 130, and 160–161 (KH). The active-site Proton donor/acceptor is histidine 173. The active-site Nucleophile is aspartate 242.

This sequence belongs to the glycosyl hydrolase 3 family. NagZ subfamily.

It localises to the cytoplasm. It carries out the reaction Hydrolysis of terminal non-reducing N-acetyl-D-hexosamine residues in N-acetyl-beta-D-hexosaminides.. It functions in the pathway cell wall biogenesis; peptidoglycan recycling. Plays a role in peptidoglycan recycling by cleaving the terminal beta-1,4-linked N-acetylglucosamine (GlcNAc) from peptide-linked peptidoglycan fragments, giving rise to free GlcNAc, anhydro-N-acetylmuramic acid and anhydro-N-acetylmuramic acid-linked peptides. The polypeptide is Beta-hexosaminidase (Vibrio cholerae serotype O1 (strain ATCC 39541 / Classical Ogawa 395 / O395)).